Here is a 234-residue protein sequence, read N- to C-terminus: Glutathione S-transferase 1 (234 aa).

Residues 3-90 (LPIIKVHWLD…YVLQHFDHSH (88 aa)) form the GST N-terminal domain. Residues 96 to 234 (DADIADQINY…EKARALGSNF (139 aa)) form the GST C-terminal domain.

It belongs to the GST superfamily. As to quaternary structure, homodimer.

The protein localises to the endoplasmic reticulum membrane. It carries out the reaction RX + glutathione = an S-substituted glutathione + a halide anion + H(+). This chain is Glutathione S-transferase 1 (GTT1), found in Saccharomyces cerevisiae (strain ATCC 204508 / S288c) (Baker's yeast).